We begin with the raw amino-acid sequence, 349 residues long: MDMDNLTWLHGKPKASGVLKANPEDFVVVEDLGFEPDGEGEHLLVRIRKHGCNTQFVADYLARFAKIHPRLVSYAGLKDRHAVTEQWFCLHLPGKEAPDLSTFELEGCEVLESVRQKRKLRIGSLKGNAFTLVLRHITDNQDVEQRLQQIAAHGVPNYFGSQRFGRGGNNLVLARLWANNEIRVKERSKRSFYLSASRSAMFNLISSDRLAQQQATTVLEGDALQLSGRGSWFVAAADELALLQQRVDAGELNITAPLPGDGELGTQGAALAFEQACLADQTELLALIKRERVEGARRAILLKPQNIAWNWWDEVTLELSFWLPAGSFATSVVREIMNQDNADAADIAE.

Phe-26 provides a ligand contact to substrate. Asp-79 functions as the Nucleophile in the catalytic mechanism. A substrate-binding site is contributed by Asn-128. The TRUD domain maps to 154–302 (GVPNYFGSQR…VEGARRAILL (149 aa)). Phe-328 provides a ligand contact to substrate.

It belongs to the pseudouridine synthase TruD family.

The catalysed reaction is uridine(13) in tRNA = pseudouridine(13) in tRNA. Responsible for synthesis of pseudouridine from uracil-13 in transfer RNAs. This Yersinia enterocolitica serotype O:8 / biotype 1B (strain NCTC 13174 / 8081) protein is tRNA pseudouridine synthase D.